The chain runs to 156 residues: ATP synthase subunit b (156 aa).

The chain crosses the membrane as a helical span at residues 11-31; sequence AIAFVIFVWFCMKYVWPPLMA.

It belongs to the ATPase B chain family. In terms of assembly, F-type ATPases have 2 components, F(1) - the catalytic core - and F(0) - the membrane proton channel. F(1) has five subunits: alpha(3), beta(3), gamma(1), delta(1), epsilon(1). F(0) has three main subunits: a(1), b(2) and c(10-14). The alpha and beta chains form an alternating ring which encloses part of the gamma chain. F(1) is attached to F(0) by a central stalk formed by the gamma and epsilon chains, while a peripheral stalk is formed by the delta and b chains.

It is found in the cell inner membrane. Functionally, f(1)F(0) ATP synthase produces ATP from ADP in the presence of a proton or sodium gradient. F-type ATPases consist of two structural domains, F(1) containing the extramembraneous catalytic core and F(0) containing the membrane proton channel, linked together by a central stalk and a peripheral stalk. During catalysis, ATP synthesis in the catalytic domain of F(1) is coupled via a rotary mechanism of the central stalk subunits to proton translocation. Its function is as follows. Component of the F(0) channel, it forms part of the peripheral stalk, linking F(1) to F(0). The sequence is that of ATP synthase subunit b from Klebsiella pneumoniae (strain 342).